The primary structure comprises 614 residues: Inactive leucine-rich repeat receptor-like serine/threonine-protein kinase At5g24100 (614 aa).

An N-terminal signal peptide occupies residues 1–21 (MSRGRSFIFYFVLFLFFGSSA). The Extracellular portion of the chain corresponds to 22 to 251 (LYSQVTGDLA…KNGIYISEPA (230 aa)). An N-linked (GlcNAc...) asparagine glycan is attached at Asn53. 6 LRR repeats span residues 71–95 (GTRV…TISR), 96–120 (LSEL…FLQL), 121–146 (KKLK…TWTN), 148–167 (TVLD…GFAN), 168–190 (LTGL…DLNL), and 191–214 (PGLR…LKRF). N-linked (GlcNAc...) asparagine glycans are attached at residues Asn146, Asn158, and Asn167. N-linked (GlcNAc...) asparagine glycans are attached at residues Asn197 and Asn202. A helical transmembrane segment spans residues 252–272 (ILGIAISVCFVIFFVIAVVII). Topologically, residues 273–614 (VCYVKRQRKS…VETLEEIERD (342 aa)) are cytoplasmic. The Protein kinase domain occupies 341 to 611 (IASAEFLGKG…VKVVETLEEI (271 aa)). Ser343 carries the phosphoserine modification. Residues 347–355 (LGKGVFGMT) and Lys369 each bind ATP. Ser420 is modified (phosphoserine). Phosphothreonine is present on residues Thr441, Thr514, and Thr591. Residues 578–601 (AKLLQMLQLGTSCTAMVPAKRPDM) form an LRR 7 repeat.

Belongs to the protein kinase superfamily. Ser/Thr protein kinase family.

Its subcellular location is the cell membrane. The sequence is that of Inactive leucine-rich repeat receptor-like serine/threonine-protein kinase At5g24100 from Arabidopsis thaliana (Mouse-ear cress).